We begin with the raw amino-acid sequence, 348 residues long: Succinylglutamate desuccinylase (348 aa).

His-67, Glu-70, and His-164 together coordinate Zn(2+). Residue Glu-228 is part of the active site.

This sequence belongs to the AspA/AstE family. Succinylglutamate desuccinylase subfamily. Zn(2+) serves as cofactor.

It catalyses the reaction N-succinyl-L-glutamate + H2O = L-glutamate + succinate. It functions in the pathway amino-acid degradation; L-arginine degradation via AST pathway; L-glutamate and succinate from L-arginine: step 5/5. Functionally, transforms N(2)-succinylglutamate into succinate and glutamate. The chain is Succinylglutamate desuccinylase from Shewanella denitrificans (strain OS217 / ATCC BAA-1090 / DSM 15013).